We begin with the raw amino-acid sequence, 79 residues long: Protein S100-G (79 aa).

S2 carries the N-acetylserine modification. EF-hand domains follow at residues I13–S48 and K45–Q79. Q26 and E31 together coordinate Ca(2+). S42 is subject to Phosphoserine. D58, N60, D62, E64, and E69 together coordinate Ca(2+).

It belongs to the S-100 family.

This Bos taurus (Bovine) protein is Protein S100-G (S100G).